The primary structure comprises 650 residues: Zinc finger CCCH domain-containing protein 55 (650 aa).

A disordered region spans residues 67–162 (NSPSSTPTSP…THSGSADAAG (96 aa)). Low complexity predominate over residues 105–128 (SPSSPSSTSPWSFNNCINGNNGNN). Residues 141 to 154 (PFSSHQSNGLSATH) are compositionally biased toward polar residues. A C3H1-type zinc finger spans residues 232-254 (PCVYFSRGLCKNGESCKFIHGGY). The RRM domain occupies 357–433 (RQIYLTFPAD…RVLVKPYKEK (77 aa)). The disordered stretch occupies residues 566 to 650 (PVVNPMSVNN…PPVTTNNLMQ (85 aa)). Residues 581 to 590 (AKEETNKSEL) show a composition bias toward basic and acidic residues.

This is Zinc finger CCCH domain-containing protein 55 from Arabidopsis thaliana (Mouse-ear cress).